The following is a 402-amino-acid chain: Multidrug resistance protein MdtH (402 aa).

A run of 11 helical transmembrane segments spans residues Y13–I33, S34–L54, P99–F116, L139–L159, L165–L185, V214–M234, A243–I263, L277–L297, L300–T320, L340–G360, and L368–F388.

The protein belongs to the major facilitator superfamily. DHA1 family. MdtH (TC 2.A.1.2.21) subfamily.

The protein resides in the cell inner membrane. This is Multidrug resistance protein MdtH from Klebsiella pneumoniae (strain 342).